We begin with the raw amino-acid sequence, 811 residues long: Phenylalanine--tRNA ligase beta subunit (811 aa).

One can recognise a tRNA-binding domain in the interval arginine 39 to glycine 151. The B5 domain maps to glutamate 409 to glutamate 495. Mg(2+)-binding residues include aspartate 473, aspartate 479, glutamate 482, and glutamate 483. Residues serine 717–arginine 810 form the FDX-ACB domain.

It belongs to the phenylalanyl-tRNA synthetase beta subunit family. Type 1 subfamily. Tetramer of two alpha and two beta subunits. Mg(2+) serves as cofactor.

It localises to the cytoplasm. The enzyme catalyses tRNA(Phe) + L-phenylalanine + ATP = L-phenylalanyl-tRNA(Phe) + AMP + diphosphate + H(+). This Synechococcus sp. (strain ATCC 27144 / PCC 6301 / SAUG 1402/1) (Anacystis nidulans) protein is Phenylalanine--tRNA ligase beta subunit.